The following is a 397-amino-acid chain: Glia-derived nexin (397 aa).

Positions 1–19 (MNWHFPFFILTTVTLSSVY) are cleaved as a signal peptide. N-linked (GlcNAc...) asparagine glycosylation is present at Asn-159.

The protein belongs to the serpin family.

Its subcellular location is the secreted. It localises to the extracellular space. In terms of biological role, serine protease inhibitor with activity toward thrombin, trypsin, and urokinase. Promotes neurite extension by inhibiting thrombin. Binds heparin. This chain is Glia-derived nexin (Serpine2), found in Rattus norvegicus (Rat).